Consider the following 498-residue polypeptide: MESPRGWTLQVAPEEGQVLCNVKTATRGLSEGAVSGGWGAWENSTEVPREAGDGQRQQATLGAADEQGGPGRELGPADGGRDGAGPRSEPADRALRPSPLPEEPGCRCGECGKAFSQGSYLLQHRRVHTGEKPYTCPECGKAFAWSSNLSQHQRIHSGEKPYACRECGKAFRAHSQLIHHQETHSGLKPFRCPDCGKSFGRSTTLVQHRRTHTGEKPYECPECGKAFSWNSNFLEHRRVHTGARPHACRDCGKAFSQSSNLAEHLKIHAGARPHACPDCGKAFVRVAGLRQHRRTHSSEKPFPCAECGKAFRESSQLLQHQRTHTGERPFECAECGQAFVMGSYLAEHRRVHTGEKPHACAQCGKAFSQRSNLLSHRRTHSGAKPFACADCGKAFRGSSGLAHHRLSHTGERPFACAECGKAFRGSSELRQHQRLHSGERPFVCAHCSKAFVRKSELLSHRRTHTGERPYACGECGKPFSHRCNLNEHQKRHGGRAAP.

The interval 30–104 is disordered; sequence SEGAVSGGWG…LRPSPLPEEP (75 aa). C2H2-type zinc fingers lie at residues 106–128, 134–156, 162–184, 190–212, 218–240, 246–268, 274–296, 302–324, 330–352, 358–380, 386–408, 414–436, 442–464, and 470–492; these read CRCGECGKAFSQGSYLLQHRRVH, YTCPECGKAFAWSSNLSQHQRIH, YACRECGKAFRAHSQLIHHQETH, FRCPDCGKSFGRSTTLVQHRRTH, YECPECGKAFSWNSNFLEHRRVH, HACRDCGKAFSQSSNLAEHLKIH, HACPDCGKAFVRVAGLRQHRRTH, FPCAECGKAFRESSQLLQHQRTH, FECAECGQAFVMGSYLAEHRRVH, HACAQCGKAFSQRSNLLSHRRTH, FACADCGKAFRGSSGLAHHRLSH, FACAECGKAFRGSSELRQHQRLH, FVCAHCSKAFVRKSELLSHRRTH, and YACGECGKPFSHRCNLNEHQKRH.

It belongs to the krueppel C2H2-type zinc-finger protein family.

It localises to the nucleus. Functionally, may be involved in transcriptional regulation. This Homo sapiens (Human) protein is Zinc finger protein 497 (ZNF497).